An 858-amino-acid polypeptide reads, in one-letter code: Elongation factor 2 (858 aa).

Positions 17-362 constitute a tr-type G domain; it reads ANIRNMSVIA…MITIHLPSPV (346 aa). Residues 26–33, 158–161, and 216–218 each bind GTP; these read AHVDHGKS, NKMD, and SGL. Position 715 is a diphthamide (histidine 715).

It belongs to the TRAFAC class translation factor GTPase superfamily. Classic translation factor GTPase family. EF-G/EF-2 subfamily. Binds to 80S ribosomes. Actively translating ribosomes show mutually exclusive binding of eIF5a (EIF5A or EIF5A2) and EEF2/eEF2. Interacts with serbp1; interaction sequesters eef2/eEF2 at the A-site of the ribosome, thereby blocking the interaction sites of the mRNA-tRNA complex, promoting ribosome stabilization and hibernation. Interacts with habp4; interaction takes place at the A-site of hibernating ribosomes and promotes ribosome stabilization.

The protein resides in the cytoplasm. It localises to the nucleus. The enzyme catalyses GTP + H2O = GDP + phosphate + H(+). In terms of biological role, catalyzes the GTP-dependent ribosomal translocation step during translation elongation. During this step, the ribosome changes from the pre-translocational (PRE) to the post-translocational (POST) state as the newly formed A-site-bound peptidyl-tRNA and P-site-bound deacylated tRNA move to the P and E sites, respectively. Catalyzes the coordinated movement of the two tRNA molecules, the mRNA and conformational changes in the ribosome. The sequence is that of Elongation factor 2 from Xenopus laevis (African clawed frog).